Reading from the N-terminus, the 180-residue chain is Sperm protein associated with the nucleus on the X chromosome N2 (180 aa).

Disordered regions lie at residues 1–46 and 64–180; these read MEQP…KTKT and NSNQ…GGED. Positions 10 to 26 are enriched in basic and acidic residues; that stretch reads GEKRKSPCESNNKKNDE. Residues 82–169 are compositionally biased toward acidic residues; the sequence is QEEEDEGLDS…SSQEDEDLDS (88 aa). Positions 170-180 are enriched in low complexity; it reads SEGSSQEGGED.

It belongs to the SPAN-X family.

This chain is Sperm protein associated with the nucleus on the X chromosome N2 (SPANXN2), found in Homo sapiens (Human).